The sequence spans 313 residues: Putative S-adenosyl-L-methionine-dependent methyltransferase MAV_4573 (313 aa).

Residues aspartate 129 and 158–159 contribute to the S-adenosyl-L-methionine site; that span reads DL.

Belongs to the UPF0677 family.

Exhibits S-adenosyl-L-methionine-dependent methyltransferase activity. The sequence is that of Putative S-adenosyl-L-methionine-dependent methyltransferase MAV_4573 from Mycobacterium avium (strain 104).